The following is a 425-amino-acid chain: Kynurenine/alpha-aminoadipate aminotransferase, mitochondrial (425 aa).

A mitochondrion-targeting transit peptide spans 1–29 (MNYARFITATSAARKPSTIRVMTEILSKA). A substrate-binding site is contributed by Arg-20. Position 69 is an N6-acetyllysine (Lys-69). Tyr-74 and Tyr-142 together coordinate substrate. The interval 178-208 (WKPEDSKNPKKNSPKFLYTVPNGNNPSGNSL) is disordered. Lys-179 is modified (N6-acetyllysine). Residues 198-208 (PNGNNPSGNSL) are compositionally biased toward polar residues. Asn-202 is a substrate binding site. The residue at position 263 (Lys-263) is an N6-(pyridoxal phosphate)lysine; alternate. N6-acetyllysine; alternate is present on residues Lys-263 and Lys-339. 2 positions are modified to N6-succinyllysine; alternate: Lys-263 and Lys-339. Arg-399 is a substrate binding site. An N6-acetyllysine modification is found at Lys-422.

The protein belongs to the class-I pyridoxal-phosphate-dependent aminotransferase family. As to quaternary structure, homodimer. Pyridoxal 5'-phosphate serves as cofactor.

The protein resides in the mitochondrion. It catalyses the reaction L-kynurenine + 2-oxoglutarate = kynurenate + L-glutamate + H2O. The enzyme catalyses L-2-aminoadipate + 2-oxoglutarate = 2-oxoadipate + L-glutamate. The catalysed reaction is glycine + 2-oxoglutarate = glyoxylate + L-glutamate. It carries out the reaction L-kynurenine + glyoxylate = kynurenate + glycine + H2O. It catalyses the reaction 3-hydroxy-L-kynurenine + glyoxylate = xanthurenate + glycine + H2O. The enzyme catalyses 2-oxohexanoate + L-kynurenine = L-2-aminohexanoate + kynurenate + H2O. The catalysed reaction is 3-phenylpyruvate + L-kynurenine = kynurenate + L-phenylalanine + H2O. It carries out the reaction 4-methylsulfanyl-2-oxobutanoate + L-kynurenine = kynurenate + L-methionine + H2O. It catalyses the reaction 2-oxo-3-sulfanylpropanoate + L-kynurenine = kynurenate + L-cysteine + H2O. The enzyme catalyses indole-3-pyruvate + L-kynurenine = kynurenate + L-tryptophan + H2O. The catalysed reaction is 2-oxopentanoate + L-kynurenine = L-2-aminopentanoate + kynurenate + H2O. It carries out the reaction 4-methyl-2-oxopentanoate + L-kynurenine = kynurenate + L-leucine + H2O. It catalyses the reaction glyoxylate + L-methionine = 4-methylsulfanyl-2-oxobutanoate + glycine. The enzyme catalyses L-2-aminoadipate + glyoxylate = 2-oxoadipate + glycine. The catalysed reaction is L-tyrosine + glyoxylate = 3-(4-hydroxyphenyl)pyruvate + glycine. It carries out the reaction glyoxylate + L-phenylalanine = 3-phenylpyruvate + glycine. It catalyses the reaction L-tryptophan + glyoxylate = indole-3-pyruvate + glycine. The enzyme catalyses L-leucine + glyoxylate = 4-methyl-2-oxopentanoate + glycine. The catalysed reaction is 2-oxobutanoate + L-kynurenine = (2S)-2-aminobutanoate + kynurenate + H2O. It carries out the reaction 2-oxoadipate + L-kynurenine = L-2-aminoadipate + kynurenate + H2O. The protein operates within amino-acid degradation; L-lysine degradation via saccharopine pathway; glutaryl-CoA from L-lysine: step 4/6. Functionally, transaminase with broad substrate specificity. Has transaminase activity towards aminoadipate, kynurenine, methionine and glutamate. Shows activity also towards tryptophan, aspartate and hydroxykynurenine. Accepts a variety of oxo-acids as amino-group acceptors, with a preference for 2-oxoglutarate, 2-oxocaproic acid, phenylpyruvate and alpha-oxo-gamma-methiol butyric acid. Can also use glyoxylate as amino-group acceptor (in vitro). This Bos taurus (Bovine) protein is Kynurenine/alpha-aminoadipate aminotransferase, mitochondrial.